The chain runs to 153 residues: 3-hydroxyacyl-[acyl-carrier-protein] dehydratase FabZ (153 aa).

H57 is an active-site residue.

Belongs to the thioester dehydratase family. FabZ subfamily.

The protein localises to the cytoplasm. The catalysed reaction is a (3R)-hydroxyacyl-[ACP] = a (2E)-enoyl-[ACP] + H2O. In terms of biological role, involved in unsaturated fatty acids biosynthesis. Catalyzes the dehydration of short chain beta-hydroxyacyl-ACPs and long chain saturated and unsaturated beta-hydroxyacyl-ACPs. This is 3-hydroxyacyl-[acyl-carrier-protein] dehydratase FabZ from Xanthomonas oryzae pv. oryzae (strain MAFF 311018).